Here is a 1512-residue protein sequence, read N- to C-terminus: Bifunctional glutamate/proline--tRNA ligase (1512 aa).

The tract at residues 164–759 (GTKWDVSGNR…SSVLYSRVAV (596 aa)) is glutamate--tRNA ligase. The short motif at 204–214 (PEASGYLHIGH) is the 'HIGH' region element. A disordered region spans residues 294 to 315 (TPAEQMKAEREQRTESKHRKNS). Over residues 299-308 (MKAEREQRTE) the composition is skewed to basic and acidic residues. K300 carries the N6-acetyllysine; alternate modification. K300 is modified (N6-malonyllysine; alternate). T355 bears the Phosphothreonine mark. K417 bears the N6-acetyllysine mark. The short motif at 432–436 (VLSKR) is the 'KMSKS' region element. S434 bears the Phosphoserine mark. K498, K535, K542, and K637 each carry N6-acetyllysine. Residues 709–736 (EMPTSGSKEKTKVEISKKETSSAPKERP) show a composition bias toward basic and acidic residues. The interval 709 to 742 (EMPTSGSKEKTKVEISKKETSSAPKERPAPAVSS) is disordered. Residues 749-805 (DSSVLYSRVAVQGDVVRELKAKKAPKEDIDAAVKQLLTLKAEYKEKTGQEYKPGNPS) form the WHEP-TRS 1 domain. The segment at 760 to 956 (QGDVVRELKA…GIEYKPVSAT (197 aa)) is 3 X 57 AA approximate repeats. K788 carries the post-translational modification N6-acetyllysine. A disordered region spans residues 795–819 (TGQEYKPGNPSAAAVQTVSTKSSSN). A compositionally biased stretch (polar residues) spans 808 to 819 (AVQTVSTKSSSN). The region spanning 822-878 (ESTSLYNKVAAQGEVVRKLKAEKAPKAKVTEAVECLLSLKAEYKEKTGKDYVPGQPP) is the WHEP-TRS 2 domain. An N6-acetyllysine modification is found at K861. Disordered regions lie at residues 869–898 (GKDY…GAEK) and 956–1011 (TGAE…PKKQ). Y872 carries the phosphotyrosine modification. Residues 878 to 892 (PASQNSHSNPVSNAQ) show a composition bias toward polar residues. S885 is subject to Phosphoserine. Residues 900–956 (EAKVLFDRVACQGEVVRKLKAEKASKDQVDSAVQELLQLKAQYKSLTGIEYKPVSAT) enclose the WHEP-TRS 3 domain. Basic and acidic residues predominate over residues 958–976 (AEDKDKKKKEKENKSEKQN). The segment covering 997 to 1006 (LSSGGAGEGQ) has biased composition (gly residues). S998 bears the Phosphoserine mark. S999 carries the phosphoserine; by RPS6KB1 modification. Residues 1007–1512 (GPKKQTRLGL…KFYTLFGRSY (506 aa)) are proline--tRNA ligase. Residues 1121–1123 (TSE) and R1152 contribute to the L-proline site. The ATP site is built by R1152, E1154, R1163, T1164, Q1237, and T1240. R1152 bears the Omega-N-methylarginine mark. Mg(2+) is bound at residue Q1237. H1242 serves as a coordination point for L-proline. ATP is bound by residues T1276 and R1278. The residue at position 1350 (S1350) is a Phosphoserine. Zn(2+) contacts are provided by C1448, C1453, C1495, and C1497. K1503 carries the post-translational modification N6-acetyllysine.

In the N-terminal section; belongs to the class-I aminoacyl-tRNA synthetase family. Glutamate--tRNA ligase type 2 subfamily. It in the C-terminal section; belongs to the class-II aminoacyl-tRNA synthetase family. Homodimer. Part of the aminoacyl-tRNA synthetase multienzyme complex, also know as multisynthetase complex, that is composed of the tRNA ligases for Arg (RARS1), Asp (DARS1), Gln (QARS1), Ile (IARS1), Leu (LARS1), Lys (KARS1), Met (MARS1) the bifunctional ligase for Glu and Pro (EPRS1) and the auxiliary subunits AIMP1/p43, AIMP2/p38 and EEF1E1/p18. Forms a linear complex that contains MARS1, EEF1E1, EPRS1 and AIMP2 that is at the core of the multisubunit complex. Interacts with TARS3. Interacts with DUS2L. Component of the GAIT complex which is composed of EPRS1, RPL13A and GAPDH. Interacts (phosphorylated at Ser-999) with SLC27A1; mediates the translocation of SLC27A1 from the cytoplasm to the plasma membrane thereby increasing the uptake of long-chain fatty acids. In terms of processing, phosphorylated at Ser-999 by RPS6KB1; triggers EPRS1 release from the aminoacyl-tRNA synthetase multienzyme complex. In monocytes, the IFN-gamma-induced phosphorylation at Ser-999 releases EPRS1 from the aminoacyl-tRNA synthetase multienzyme complex, allowing its association with the GAIT complex. Phosphorylation at Ser-999 is specifically required for the RPL13A-mediated interaction of the GAIT complex with eIF4G. Phosphorylation at Ser-999 by RPS6KB1, is also induced by insulin through activation of the mTORC1 signaling pathway and promotes the interaction of EPRS1 with SLC27A1.

It localises to the cytoplasm. The protein resides in the cytosol. Its subcellular location is the membrane. It carries out the reaction tRNA(Glu) + L-glutamate + ATP = L-glutamyl-tRNA(Glu) + AMP + diphosphate. The catalysed reaction is tRNA(Pro) + L-proline + ATP = L-prolyl-tRNA(Pro) + AMP + diphosphate. Its function is as follows. Multifunctional protein which primarily functions within the aminoacyl-tRNA synthetase multienzyme complex, also known as multisynthetase complex. Within the complex it catalyzes the attachment of both L-glutamate and L-proline to their cognate tRNAs in a two-step reaction where the amino acid is first activated by ATP to form a covalent intermediate with AMP. Subsequently, the activated amino acid is transferred to the acceptor end of the cognate tRNA to form L-glutamyl-tRNA(Glu) and L-prolyl-tRNA(Pro). Upon interferon-gamma stimulation, EPRS1 undergoes phosphorylation, causing its dissociation from the aminoacyl-tRNA synthetase multienzyme complex. It is recruited to form the GAIT complex, which binds to stem loop-containing GAIT elements found in the 3'-UTR of various inflammatory mRNAs, such as ceruloplasmin. The GAIT complex inhibits the translation of these mRNAs, allowing interferon-gamma to redirect the function of EPRS1 from protein synthesis to translation inhibition in specific cell contexts. Furthermore, it can function as a downstream effector in the mTORC1 signaling pathway, by promoting the translocation of SLC27A1 from the cytoplasm to the plasma membrane where it mediates the uptake of long-chain fatty acid by adipocytes. Thereby, EPRS1 also plays a role in fat metabolism and more indirectly influences lifespan. The polypeptide is Bifunctional glutamate/proline--tRNA ligase (Mus musculus (Mouse)).